A 155-amino-acid chain; its full sequence is DNA polymerase epsilon subunit 4 (155 aa).

Composition is skewed to acidic residues over residues 1 to 16 and 24 to 48; these read MASE…EEQD and ETEE…DNPE. A disordered region spans residues 1 to 76; the sequence is MASEELFEAE…APADNEAKMT (76 aa). Polar residues predominate over residues 49-65; the sequence is AESTTEQLTEKPVTNGN.

As to quaternary structure, component of the DNA polymerase epsilon complex consisting of four subunits: the catalytic subunit PolE1/DNApol-epsilon255 and the accessory subunits PolE2/DNApol-epsilon58, Chrac-14/DNApolE3 and PolE4/Mes4.

Its subcellular location is the nucleus. In terms of biological role, accessory component of the DNA polymerase epsilon complex. Participates in DNA repair and in chromosomal DNA replication. Has a role in cell cycle progression. Required for wing morphogenesis. The protein is DNA polymerase epsilon subunit 4 of Drosophila melanogaster (Fruit fly).